A 335-amino-acid chain; its full sequence is Dolichyl-diphosphooligosaccharide--protein glycosyltransferase subunit MAGT1 (335 aa).

The N-terminal stretch at 1 to 29 (MASPRWFWSVCAIAAVALLLVSKVPSASA) is a signal peptide. Residues 30 to 184 (QRKKEMVLSE…DVNIRVIRPP (155 aa)) are Extracellular-facing. The region spanning 47–175 (WANKRPVIRM…IARWIADRTD (129 aa)) is the Thioredoxin domain. N-linked (GlcNAc...) asparagine glycosylation occurs at Asn-71. An intrachain disulfide couples Cys-87 to Cys-90. Residues 185 to 205 (NYAGPLMLGLLLAVIGGLVYL) traverse the membrane as a helical segment. The Cytoplasmic segment spans residues 206 to 209 (RRSN). A helical transmembrane segment spans residues 210–230 (MEFLFNKTGWAFAALCFVLAM). Residues 231 to 270 (TSGQMWNHIRGPPYAHKNPHTGHVNYIHGSSQAQFVAETH) lie on the Extracellular side of the membrane. The chain crosses the membrane as a helical span at residues 271–291 (IVLLFNGGVTLGMVLLCEAAT). Over 292-300 (SDMDIGKRR) the chain is Cytoplasmic. Residues 301-321 (MMCIAGIGLVVLFFSWMLSIF) form a helical membrane-spanning segment. Residues 322–335 (RSKYHGYPYSFLMS) are Extracellular-facing.

The protein belongs to the OST3/OST6 family. Accessory component of the STT3B-containing form of the oligosaccharyltransferase (OST) complex. OST exists in two different complex forms which contain common core subunits RPN1, RPN2, OST48, OST4, DAD1 and TMEM258, either STT3A or STT3B as catalytic subunits, and form-specific accessory subunits. OST can form stable complexes with the Sec61 complex or with both the Sec61 and TRAP complexes. The association of TUSC3 or MAGT1 with the STT3B-containing complex seems to be mutually exclusvice. As to expression, expressed at high levels in kidney, colon, heart and liver. Expressed at lower levels in intestine, spleen, brain and lung.

Its subcellular location is the cell membrane. It is found in the endoplasmic reticulum. The protein resides in the endoplasmic reticulum membrane. The protein operates within protein modification; protein glycosylation. Accessory component of the STT3B-containing form of the N-oligosaccharyl transferase (OST) complex which catalyzes the transfer of a high mannose oligosaccharide from a lipid-linked oligosaccharide donor to an asparagine residue within an Asn-X-Ser/Thr consensus motif in nascent polypeptide chains. Involved in N-glycosylation of STT3B-dependent substrates. Specifically required for the glycosylation of a subset of acceptor sites that are near cysteine residues; in this function seems to act redundantly with TUSC3. In its oxidized form proposed to form transient mixed disulfides with a glycoprotein substrate to facilitate access of STT3B to the unmodified acceptor site. Also has oxidoreductase-independent functions in the STT3B-containing OST complex possibly involving substrate recognition. Could indirectly play a role in Mg(2+) transport in epithelial cells. The chain is Dolichyl-diphosphooligosaccharide--protein glycosyltransferase subunit MAGT1 from Mus musculus (Mouse).